We begin with the raw amino-acid sequence, 272 residues long: Tropinone reductase-like 1 (272 aa).

Ile-17–Val-41 serves as a coordination point for NAD(+). Ser-150 contributes to the substrate binding site. Tyr-163 serves as the catalytic Proton acceptor.

Belongs to the short-chain dehydrogenases/reductases (SDR) family.

Functionally, has no tropinone reductase activity. The chain is Tropinone reductase-like 1 from Erythroxylum coca (Coca plant).